We begin with the raw amino-acid sequence, 138 residues long: Phospholipase A2 homolog 1 (138 aa).

The signal sequence occupies residues 1 to 16 (MRTLWIMAVLLVGVEG). 7 disulfides stabilise this stretch: cysteine 42–cysteine 132, cysteine 44–cysteine 60, cysteine 59–cysteine 111, cysteine 65–cysteine 138, cysteine 66–cysteine 104, cysteine 73–cysteine 97, and cysteine 91–cysteine 102. The segment at 121 to 134 (KKYKNNYLKPFCKK) is important for membrane-damaging activities in eukaryotes and bacteria; heparin-binding.

It belongs to the phospholipase A2 family. Group II subfamily. K49 sub-subfamily. Homodimer; non-covalently linked (probable alternative/compact dimer conformation in solution). As to expression, expressed by the venom gland.

The protein resides in the secreted. Functionally, snake venom phospholipase A2 homolog that lacks enzymatic and anticoagulant activities. In mice, it induces conspicuous local myonecrosis, edema, and a systemic interleukin-6 response. In vitro, it is cytolytic upon myoblasts, and weakly bactericidal. A model of myotoxic mechanism has been proposed: an apo Lys49-PLA2 is activated by the entrance of a hydrophobic molecule (e.g. fatty acid) at the hydrophobic channel of the protein leading to a reorientation of a monomer. This reorientation causes a transition between 'inactive' to 'active' states, causing alignment of C-terminal and membrane-docking sites (MDoS) side-by-side and putting the membrane-disruption sites (MDiS) in the same plane, exposed to solvent and in a symmetric position for both monomers. The MDoS region stabilizes the toxin on membrane by the interaction of charged residues with phospholipid head groups. Subsequently, the MDiS region destabilizes the membrane with penetration of hydrophobic residues. This insertion causes a disorganization of the membrane, allowing an uncontrolled influx of ions (i.e. calcium and sodium), and eventually triggering irreversible intracellular alterations and cell death. The sequence is that of Phospholipase A2 homolog 1 from Bothrops atrox (Barba amarilla).